A 356-amino-acid chain; its full sequence is Histidine biosynthesis bifunctional protein HisB (356 aa).

Positions 1-166 (MSKKVLFIDR…AICNYLTSLN (166 aa)) are histidinol-phosphatase. Asp9 acts as the Nucleophile in catalysis. Positions 9 and 11 each coordinate Mg(2+). The active-site Proton donor is Asp11. Zn(2+) contacts are provided by Cys93, His95, Cys101, and Cys103. Residue Asp130 coordinates Mg(2+). The segment at 167–356 (RYAHVKRITK…VLPSSKGVLS (190 aa)) is imidazoleglycerol-phosphate dehydratase.

This sequence in the N-terminal section; belongs to the histidinol-phosphatase family. It in the C-terminal section; belongs to the imidazoleglycerol-phosphate dehydratase family. Mg(2+) serves as cofactor. Zn(2+) is required as a cofactor.

It localises to the cytoplasm. It catalyses the reaction D-erythro-1-(imidazol-4-yl)glycerol 3-phosphate = 3-(imidazol-4-yl)-2-oxopropyl phosphate + H2O. The enzyme catalyses L-histidinol phosphate + H2O = L-histidinol + phosphate. It participates in amino-acid biosynthesis; L-histidine biosynthesis; L-histidine from 5-phospho-alpha-D-ribose 1-diphosphate: step 6/9. Its pathway is amino-acid biosynthesis; L-histidine biosynthesis; L-histidine from 5-phospho-alpha-D-ribose 1-diphosphate: step 8/9. This chain is Histidine biosynthesis bifunctional protein HisB, found in Baumannia cicadellinicola subsp. Homalodisca coagulata.